Consider the following 514-residue polypeptide: MRYPSTANSAVSMRSTEELLLSNGTAGKMNGALEHSDQPDPDAIKMFVGQIPRSWSEKELKELFEPYGAVYQINILRDRSQNPPQSKGCCFVTFYTRKAALEAQNALHNIKTLTGMHHPIQMKPADSEKSNAVEDRKLFIGMVSKKCNENDIRVMFSPYGQIEECRILRGPDGLSRGCAFVTFSTRAMAQNAIKAMHQSQTMEGCSSPMVVKFADTQKDKEQRRLQQQLAQQMQQLNSASAWGSLTGLTGLTPQYLALLQQATSSSNLGAFSGIQQMAGMNALQLQNLATLAAAAAAAQSSASPSTASALTSSTGSLGALASPAGSTANSSAAMGSLGSLGTLQGLAGATVGLNNINALAGSVNSMAALNGGLGSTGLSNGSAGPMDALTQAYSGIQQYAAAALPTLYSQSLLQQQSAAGSQKEGPEGANLFIYHLPQEFGDQDILQMFMPFGNVVSAKVFIDKQTNLSKCFGFVSYDNPVSAQAAIQAMNGFQIGMKRLKVQLKRSKNDSKPY.

RRM domains lie at 44–127 (IKMF…PADS), 136–216 (RKLF…FADT), and 429–507 (ANLF…LKRS).

This sequence belongs to the CELF/BRUNOL family.

The protein localises to the nucleus. It localises to the cytoplasm. Its function is as follows. RNA-binding protein implicated in the regulation of several post-transcriptional events. May be involved in pre-mRNA alternative splicing, mRNA translation repression and stability. This is CUGBP Elav-like family member 2 (celf2) from Danio rerio (Zebrafish).